The sequence spans 415 residues: Tyrosine--tRNA ligase (415 aa).

Positions 54 to 63 match the 'HIGH' region motif; that stretch reads PTGRDIHLGH. A 'KMSKS' region motif is present at residues 248-252; it reads KMSKS. Lys-251 lines the ATP pocket. An S4 RNA-binding domain is found at 351–415; sequence AKAFYLLSAI…GKKTFRRLTR (65 aa).

The protein belongs to the class-I aminoacyl-tRNA synthetase family. TyrS type 2 subfamily. Homodimer.

It localises to the cytoplasm. The enzyme catalyses tRNA(Tyr) + L-tyrosine + ATP = L-tyrosyl-tRNA(Tyr) + AMP + diphosphate + H(+). Its function is as follows. Catalyzes the attachment of tyrosine to tRNA(Tyr) in a two-step reaction: tyrosine is first activated by ATP to form Tyr-AMP and then transferred to the acceptor end of tRNA(Tyr). In Prochlorococcus marinus (strain MIT 9313), this protein is Tyrosine--tRNA ligase.